Consider the following 128-residue polypeptide: Glycine cleavage system H protein (128 aa).

The region spanning 24–106 (LVRIGISEFA…HGEGWLLIIR (83 aa)) is the Lipoyl-binding domain. Position 65 is an N6-lipoyllysine (Lys-65).

The protein belongs to the GcvH family. As to quaternary structure, the glycine cleavage system is composed of four proteins: P, T, L and H. It depends on (R)-lipoate as a cofactor.

The glycine cleavage system catalyzes the degradation of glycine. The H protein shuttles the methylamine group of glycine from the P protein to the T protein. The protein is Glycine cleavage system H protein of Prochlorococcus marinus (strain NATL1A).